Reading from the N-terminus, the 962-residue chain is MAVLRVPVSWLLEYVHTQTGFVGETGIRSDTRRTHTDCPVAEDILESLLSVGFEGEILDRPELSGPIVVGRVLDFTEEVHSNGKTIRWCKVRVCAPVQPNNTPLSKDCNPSTQTGNFSNADTNSALETRDIVCGASNFSKGDLVVVTLPGSNLPGGFHVTARKVYGHLSDGMIASEKELGVGDNHDGILRLAEVFQGDELSKIREGDNALDLLALTDSAVAVSITPDRGYAMSIRGIAREYALANNIPFSDPLPDDVLPAGGLSIDLRCKPNAFFTLLIQEIENNQTPQWMVRRLQLAGIRSVCPVVDITNYVMVETGQPLHAYDYDAIQGSLCVRTADKKETLDTIDGRRLELHTDDLVVADANGVLSLAGVIGGSRSRVTSDTKRILLEAGNFNPIDISLSSRRHKLYTEASARFARSVDILIAQRALARAAELIRDLASGDITELGSAYINYTQQSPILLSTLDIERVVGCCFTREEIMSSLRAIGCDVSCDSDHSTPDTQVMLVTPPSFRADLVNVQDLAEEVIRVIGFNRIPSLRLSVPHREQPLQSQQYKLENGKLENGYTLSPVTPPRTPPVTFEQRRLLGQSLAACGHVEVICYPFVNLAAAGICHIDVTHNPDSTHNPDSGSDPIIPTGVTRITEPGSSGVSGPGNVGVKEKCSADTSIEHAPTTRAISLHNPIDATEGYLRRSLIPGLLQCAHRNLSRGLCDLSIFEIGRVFLGQLRTSNLIGCNSDSTCNACSRKNTIESMNEVYQPYTVSVLQTGSAIQKQPYTEGRKYDLADVFDSARQIARGLGVDFHFVQDKHPAFHPGRCAKVICKHHHIGYTGQILPTLANKHNLPDNVFACEINLDLVAQLGCSQEIVKTLPTSPAATQHLTLTLGNNIAAASVISVVKEGAGELLEDIRLIDEYKHEESDKKSLTFAMRFRDKEKTLTAQRVNLAKENAVRLASSKFGAIMRR.

The region spanning 85–201 (TIRWCKVRVC…AEVFQGDELS (117 aa)) is the tRNA-binding domain. In terms of domain architecture, B5 spans 456-538 (TQQSPILLST…RVIGFNRIPS (83 aa)). Mg(2+)-binding residues include Asp-516, Asp-522, Glu-525, and Glu-526. Positions 621–675 (PDSTHNPDSGSDPIIPTGVTRITEPGSSGVSGPGNVGVKEKCSADTSIEHAPTTR) are insert. Positions 870-961 (PTSPAATQHL…ASSKFGAIMR (92 aa)) constitute an FDX-ACB domain.

It belongs to the phenylalanyl-tRNA synthetase beta subunit family. Type 1 subfamily. Tetramer of two alpha and two beta subunits. Mg(2+) is required as a cofactor.

The protein resides in the cytoplasm. The enzyme catalyses tRNA(Phe) + L-phenylalanine + ATP = L-phenylalanyl-tRNA(Phe) + AMP + diphosphate + H(+). This Tropheryma whipplei (strain Twist) (Whipple's bacillus) protein is Phenylalanine--tRNA ligase beta subunit.